Consider the following 161-residue polypeptide: Regulator of ribonuclease activity A (161 aa).

This sequence belongs to the RraA family. As to quaternary structure, homotrimer. Binds to both RNA-binding sites in the C-terminal region of Rne and to RhlB.

The protein localises to the cytoplasm. In terms of biological role, globally modulates RNA abundance by binding to RNase E (Rne) and regulating its endonucleolytic activity. Can modulate Rne action in a substrate-dependent manner by altering the composition of the degradosome. Modulates RNA-binding and helicase activities of the degradosome. The sequence is that of Regulator of ribonuclease activity A from Cronobacter sakazakii (strain ATCC BAA-894) (Enterobacter sakazakii).